Reading from the N-terminus, the 645-residue chain is Putative galactocerebrosidase (645 aa).

A signal peptide spans 1–16 (MFSIFIKIILILPSIA). 2 residues coordinate substrate: Thr87 and Trp128. An N-linked (GlcNAc...) asparagine glycan is attached at Asn141. Substrate is bound at residue Asn171. Glu172 serves as the catalytic Proton donor/acceptor. 2 N-linked (GlcNAc...) asparagine glycosylation sites follow: Asn174 and Asn193. Glu248 functions as the Nucleophile in the catalytic mechanism. The cysteines at positions 261 and 365 are disulfide-linked. N-linked (GlcNAc...) asparagine glycans are attached at residues Asn274, Asn395, Asn411, Asn532, Asn616, Asn620, and Asn638.

Belongs to the glycosyl hydrolase 59 family.

It catalyses the reaction a beta-D-Gal-(1&lt;-&gt;1')-ceramide + H2O = an N-acyl-sphingoid base + D-galactose. It carries out the reaction a beta-D-galactosyl-(1&lt;-&gt;1')-N-acylsphing-4-enine + H2O = an N-acylsphing-4-enine + D-galactose. Hydrolyzes the galactose ester bonds of galactosylceramide, galactosylsphingoid base, lactosylceramide, and monogalactosyldiglyceride. C.elegans contain specific sphingoid bases, which are unique or different in structure compared to the sphingoid bases found in other animals. Two examples of these distinctive compounds are: 15-methylhexadecasphinganine and 15-methylhexadecasphing-4-enine. The protein is Putative galactocerebrosidase of Caenorhabditis elegans.